The primary structure comprises 267 residues: Undecaprenyl-diphosphatase (267 aa).

Helical transmembrane passes span 1–21, 40–60, 83–103, 111–131, 144–164, 189–209, 219–239, and 245–265; these read MTLF…FLPV, GLAI…LYFW, AFLA…GLII, MMRS…VLYW, GWTL…LIPG, AMLM…ADVI, DGAL…ALMM, and VSFT…LVYA.

The protein belongs to the UppP family.

The protein resides in the cell inner membrane. It carries out the reaction di-trans,octa-cis-undecaprenyl diphosphate + H2O = di-trans,octa-cis-undecaprenyl phosphate + phosphate + H(+). Its function is as follows. Catalyzes the dephosphorylation of undecaprenyl diphosphate (UPP). Confers resistance to bacitracin. The protein is Undecaprenyl-diphosphatase of Roseobacter denitrificans (strain ATCC 33942 / OCh 114) (Erythrobacter sp. (strain OCh 114)).